Consider the following 436-residue polypeptide: 3-ketoacyl-CoA thiolase (436 aa).

The active-site Acyl-thioester intermediate is C99. Residues H392 and C422 each act as proton acceptor in the active site.

The protein belongs to the thiolase-like superfamily. Thiolase family. As to quaternary structure, heterotetramer of two alpha chains (FadJ) and two beta chains (FadI).

It is found in the cytoplasm. The catalysed reaction is an acyl-CoA + acetyl-CoA = a 3-oxoacyl-CoA + CoA. The protein operates within lipid metabolism; fatty acid beta-oxidation. In terms of biological role, catalyzes the final step of fatty acid oxidation in which acetyl-CoA is released and the CoA ester of a fatty acid two carbons shorter is formed. The protein is 3-ketoacyl-CoA thiolase of Cronobacter sakazakii (strain ATCC BAA-894) (Enterobacter sakazakii).